A 448-amino-acid chain; its full sequence is Tubulin beta-2 chain (448 aa).

GTP is bound by residues Gln11, Glu69, Ser138, Gly142, Thr143, Gly144, Asn204, and Asn226. Glu69 contacts Mg(2+). The disordered stretch occupies residues 429-448; that stretch reads TADEDGYEYEDEEEVGEEDA.

The protein belongs to the tubulin family. Dimer of alpha and beta chains. A typical microtubule is a hollow water-filled tube with an outer diameter of 25 nm and an inner diameter of 15 nM. Alpha-beta heterodimers associate head-to-tail to form protofilaments running lengthwise along the microtubule wall with the beta-tubulin subunit facing the microtubule plus end conferring a structural polarity. Microtubules usually have 13 protofilaments but different protofilament numbers can be found in some organisms and specialized cells. It depends on Mg(2+) as a cofactor.

The protein resides in the cytoplasm. It localises to the cytoskeleton. Its function is as follows. Tubulin is the major constituent of microtubules, a cylinder consisting of laterally associated linear protofilaments composed of alpha- and beta-tubulin heterodimers. Microtubules grow by the addition of GTP-tubulin dimers to the microtubule end, where a stabilizing cap forms. Below the cap, tubulin dimers are in GDP-bound state, owing to GTPase activity of alpha-tubulin. This is Tubulin beta-2 chain (TUBB2) from Lupinus albus (White lupine).